A 510-amino-acid polypeptide reads, in one-letter code: Bifunctional purine biosynthesis protein PurH (510 aa).

The MGS-like domain maps to 1 to 142; the sequence is MRALLSVSDK…KNYKDVMVLC (142 aa).

Belongs to the PurH family.

The catalysed reaction is (6R)-10-formyltetrahydrofolate + 5-amino-1-(5-phospho-beta-D-ribosyl)imidazole-4-carboxamide = 5-formamido-1-(5-phospho-D-ribosyl)imidazole-4-carboxamide + (6S)-5,6,7,8-tetrahydrofolate. It catalyses the reaction IMP + H2O = 5-formamido-1-(5-phospho-D-ribosyl)imidazole-4-carboxamide. It functions in the pathway purine metabolism; IMP biosynthesis via de novo pathway; 5-formamido-1-(5-phospho-D-ribosyl)imidazole-4-carboxamide from 5-amino-1-(5-phospho-D-ribosyl)imidazole-4-carboxamide (10-formyl THF route): step 1/1. It participates in purine metabolism; IMP biosynthesis via de novo pathway; IMP from 5-formamido-1-(5-phospho-D-ribosyl)imidazole-4-carboxamide: step 1/1. In Campylobacter jejuni (strain RM1221), this protein is Bifunctional purine biosynthesis protein PurH.